The primary structure comprises 34 residues: Photosystem II reaction center protein Psb30 (34 aa).

Residues 6 to 26 (VVFQLMALFFVLAAGPAVVVL) form a helical membrane-spanning segment.

It belongs to the Psb30/Ycf12 family. As to quaternary structure, PSII is composed of 1 copy each of membrane proteins PsbA, PsbB, PsbC, PsbD, PsbE, PsbF, PsbH, PsbI, PsbJ, PsbK, PsbL, PsbM, PsbT, PsbX, PsbY, PsbZ, Psb30/Ycf12, peripheral proteins of the oxygen-evolving complex and a large number of cofactors. It forms dimeric complexes.

The protein resides in the plastid. Its subcellular location is the chloroplast thylakoid membrane. A core subunit of photosystem II (PSII), probably helps stabilize the reaction center. The sequence is that of Photosystem II reaction center protein Psb30 from Stigeoclonium helveticum (Green alga).